Consider the following 556-residue polypeptide: 2-succinyl-5-enolpyruvyl-6-hydroxy-3-cyclohexene-1-carboxylate synthase (556 aa).

It belongs to the TPP enzyme family. MenD subfamily. Homodimer. It depends on Mg(2+) as a cofactor. Requires Mn(2+) as cofactor. Thiamine diphosphate serves as cofactor.

It carries out the reaction isochorismate + 2-oxoglutarate + H(+) = 5-enolpyruvoyl-6-hydroxy-2-succinyl-cyclohex-3-ene-1-carboxylate + CO2. It participates in quinol/quinone metabolism; 1,4-dihydroxy-2-naphthoate biosynthesis; 1,4-dihydroxy-2-naphthoate from chorismate: step 2/7. It functions in the pathway quinol/quinone metabolism; menaquinone biosynthesis. Catalyzes the thiamine diphosphate-dependent decarboxylation of 2-oxoglutarate and the subsequent addition of the resulting succinic semialdehyde-thiamine pyrophosphate anion to isochorismate to yield 2-succinyl-5-enolpyruvyl-6-hydroxy-3-cyclohexene-1-carboxylate (SEPHCHC). The protein is 2-succinyl-5-enolpyruvyl-6-hydroxy-3-cyclohexene-1-carboxylate synthase of Escherichia coli (strain ATCC 8739 / DSM 1576 / NBRC 3972 / NCIMB 8545 / WDCM 00012 / Crooks).